A 687-amino-acid polypeptide reads, in one-letter code: Dictomallein (687 aa).

Disordered regions lie at residues 1-45 (MGNG…SRRL) and 73-112 (TAGGAAPLTPAVASPAGPTGSTPGSTPGATTAPAPSSTSA). One can recognise a Peptidase M66 domain in the interval 233–501 (PVFGTDADVQ…QAWIASRVLA (269 aa)). Position 393 (His393) interacts with Zn(2+). Glu394 is a catalytic residue. Residues His397 and His403 each contribute to the Zn(2+) site.

The protein belongs to the dictomallein family. It depends on Zn(2+) as a cofactor.

The chain is Dictomallein (dtmL) from Burkholderia pseudomallei (strain 1710b).